The chain runs to 88 residues: Small ribosomal subunit protein bS16 (88 aa).

This sequence belongs to the bacterial ribosomal protein bS16 family.

The polypeptide is Small ribosomal subunit protein bS16 (Anaeromyxobacter sp. (strain K)).